A 426-amino-acid chain; its full sequence is Glutamate-1-semialdehyde 2,1-aminomutase (426 aa).

At K265 the chain carries N6-(pyridoxal phosphate)lysine.

This sequence belongs to the class-III pyridoxal-phosphate-dependent aminotransferase family. HemL subfamily. Homodimer. Pyridoxal 5'-phosphate serves as cofactor.

It localises to the cytoplasm. It catalyses the reaction (S)-4-amino-5-oxopentanoate = 5-aminolevulinate. It functions in the pathway porphyrin-containing compound metabolism; protoporphyrin-IX biosynthesis; 5-aminolevulinate from L-glutamyl-tRNA(Glu): step 2/2. This chain is Glutamate-1-semialdehyde 2,1-aminomutase, found in Escherichia coli O81 (strain ED1a).